Here is a 215-residue protein sequence, read N- to C-terminus: Probable phosphoglycerate mutase GpmB (215 aa).

Substrate-binding positions include 8–15 (RHGETQWN), 21–22 (QG), R58, 82–85 (ELDM), 104–105 (RR), and 151–152 (GM). The Tele-phosphohistidine intermediate role is filled by H9. The active-site Proton donor/acceptor is E82.

This sequence belongs to the phosphoglycerate mutase family. GpmB subfamily.

The enzyme catalyses (2R)-2-phosphoglycerate = (2R)-3-phosphoglycerate. It functions in the pathway carbohydrate degradation; glycolysis; pyruvate from D-glyceraldehyde 3-phosphate: step 3/5. This Cronobacter sakazakii (strain ATCC BAA-894) (Enterobacter sakazakii) protein is Probable phosphoglycerate mutase GpmB.